The primary structure comprises 41 residues: Putative toxic protein TimP (41 aa).

Residues 1–17 (MKIRCFCIVLIVSGALL) are membrane-embedded.

Belongs to the TimP toxin family.

The protein localises to the cell inner membrane. Its function is as follows. Putative toxic component of a potential type I toxin-antitoxin (TA) system. Neutralized by sRNA antitoxin TimR which binds to the 5' UTR of timP mRNA and inhibits translation. The antitoxin gene is encoded immediately upstream and transcribed divergently from the toxin gene; antitoxin RNA is less stable than timP mRNA. The sequence is that of Putative toxic protein TimP from Escherichia coli (strain K12).